Consider the following 488-residue polypeptide: Transcriptional coactivator YAP1 (488 aa).

The span at 1-21 (MEPAQQPPPQPAPQGPAPPSV) shows a compositional bias: pro residues. The tract at residues 1-47 (MEPAQQPPPQPAPQGPAPPSVSPAGTPAAPPAPPAGHQVVHVRGDSE) is disordered. Position 46 is a phosphoserine (Ser46). Thr48 is modified (phosphothreonine). Positions 71-85 (MRLRKLPDSFFKPPE) form a coiled coil. Lys75 carries the post-translational modification N6-lactoyllysine. Residues 76–99 (LPDSFFKPPEPKSHSRQASTDAGT) are disordered. A phosphoserine mark is found at Ser90 and Ser94. Position 95 is a phosphothreonine (Thr95). Thr104 bears the Phosphothreonine; by MAPK8 and MAPK9 mark. Residues Ser112, Ser113, Ser116, and Ser123 each carry the phosphoserine modification. Ser149 carries the phosphoserine; by LATS1 and LATS2 modification. WW domains follow at residues 156 to 189 (VPLP…DPRK) and 215 to 248 (GPLP…DPRL). Disordered regions lie at residues 261–293 (SAPV…QIQL) and 339–393 (TLEQ…SSYS). A Phosphoserine modification is found at Ser274. Residues 276–488 (QGGVLGGGSS…LDKESFLTWL (213 aa)) form a transactivation domain region. The stretch at 283–344 (GSSNQQQQIQ…SQLPTLEQDG (62 aa)) forms a coiled coil. Over residues 348–376 (NAVSSPGMSQELRTMTTNSSDPFLNSGTY) the composition is skewed to polar residues. Ser352 carries the phosphoserine; by MAPK8 and MAPK9 modification. A phosphoserine mark is found at Ser356, Ser366, Ser367, and Ser373. Ser382 is modified (phosphoserine; by LATS1 and LATS2). Residues 384 to 393 (DSGLSMSSYS) show a composition bias toward polar residues. Phosphoserine; by CK1 occurs at positions 385 and 388. A Phosphotyrosine; by ABL1 modification is found at Tyr392. The residue at position 397 (Thr397) is a Phosphothreonine; by MAPK8 and MAPK9.

The protein belongs to the YAP1 family. As to quaternary structure, part of a complex when phosphorylated that contains DSG3, PKP1, YAP1 and YWHAG; the complex is required for localization of DSG3 and YAP1 to the cell membrane in keratinocytes. Binds to the SH3 domain of the YES kinase. Binds to WBP1 and WBP2. Binds, in vitro, through the WW1 domain, to neural isoforms of ENAH that contain the PPSY motif. The phosphorylated form interacts with YWHAB. Interacts (via WW domains) with LATS1 (via PPxY motif 2). Interacts with LATS2. Interacts (via WW domain 1) with isoform JM-A of ERBB4 (via PPxY motif 2). Interacts with TEAD1, TEAD2 and TEAD3. Interacts with TP73 and HCK. Interacts with RUNX1. Interacts with TEAD4. Interacts (via WW domains) with PTPN14 (via PPxY motif 2); this interaction leads to the cytoplasmic sequestration of YAP1 and inhibits its transcriptional coactivator activity. Interacts (when phosphorylated at Ser-112) with SMAD2, SMAD3 and WWTR1. Interacts with PRRG2 (via cytoplasmic domain). Interacts (via WW domains) with PRRG4 (via cytoplasmic domain). Interacts (phosphorylated) with CLDN18; the interaction sequesters YAP1 away from the nucleus and thereby restricts transcription of YAP1 target genes. Interacts with SMAD1. Interacts with AMOT; the interaction facilitates translocation of YAP1 to the cytoplasm and tight junctions. Interacts with AMOTL2, the interaction is required for ubiquitination of AMOTL2 and localization of YAP1 to tight junctions. In terms of processing, phosphorylated by LATS1 and LATS2; leading to cytoplasmic translocation and inactivation. Phosphorylated by ABL1; leading to YAP1 stabilization, enhanced interaction with TP73 and recruitment onto proapoptotic genes; in response to DNA damage. Phosphorylation at Ser-385 and Ser-388 by CK1 is triggered by previous phosphorylation at Ser-382 by LATS proteins and leads to YAP1 ubiquitination by SCF(beta-TRCP) E3 ubiquitin ligase and subsequent degradation. Phosphorylated at Thr-104, Ser-123, Ser-352 and Thr-397 by MAPK8/JNK1 and MAPK9/JNK2, which is required for the regulation of apoptosis by YAP1. Lactylation by AARS1 promotes nuclear localization and stabilization of YAP1, leading to increased Hippo signaling pathway. Delactylated by SIRT1. Post-translationally, ubiquitinated by SCF(beta-TRCP) E3 ubiquitin ligase. In terms of tissue distribution, isoforms lacking the transactivation domain seen in striatal neurons (at protein level). Ubiquitous. Isoform 2 is expressed at higher levels in the neural tissues. In the embryo, it is expressed in brain, eye, and the maxillary and frontonasal components of the primary palate.

It localises to the cytoplasm. The protein resides in the nucleus. It is found in the cell junction. Its subcellular location is the tight junction. The protein localises to the cell membrane. Its function is as follows. Transcriptional regulator with dual roles as a coactivator and corepressor. Critical downstream regulatory target in the Hippo signaling pathway, crucial for organ size control and tumor suppression by restricting proliferation and promoting apoptosis. The Hippo signaling pathway core involves a kinase cascade featuring STK3/MST2 and STK4/MST1, along with its regulatory partner SAV1, which phosphorylates and activates LATS1/2 in complex with their regulatory protein, MOB1. This activation leads to the phosphorylation and inactivation of the YAP1 oncoprotein and WWTR1/TAZ. Phosphorylation of YAP1 by LATS1/2 prevents its nuclear translocation, thereby regulating the expression of its target genes. The transcriptional regulation of gene expression requires TEAD transcription factors and modulates cell growth, anchorage-independent growth, and induction of epithelial-mesenchymal transition (EMT). Plays a key role in tissue tension and 3D tissue shape by regulating the cortical actomyosin network, acting via ARHGAP18, a Rho GTPase activating protein that suppresses F-actin polymerization. It also suppresses ciliogenesis by acting as a transcriptional corepressor of TEAD4 target genes AURKA and PLK1. In conjunction with WWTR1, regulates TGFB1-dependent SMAD2 and SMAD3 nuclear accumulation. Synergizes with WBP2 to enhance PGR activity. The sequence is that of Transcriptional coactivator YAP1 (Yap1) from Mus musculus (Mouse).